The primary structure comprises 360 residues: Heme A synthase (360 aa).

8 helical membrane-spanning segments follow: residues Trp-29–Leu-49, Phe-111–Gly-131, Leu-139–Val-159, Leu-175–Gly-195, Leu-210–Ala-230, Val-269–Leu-289, Ala-309–Val-329, and Pro-330–Ala-350. His-276 provides a ligand contact to heme. Residue His-337 coordinates heme.

This sequence belongs to the COX15/CtaA family. Type 2 subfamily. Interacts with CtaB. It depends on heme b as a cofactor.

It localises to the cell membrane. It carries out the reaction Fe(II)-heme o + 2 A + H2O = Fe(II)-heme a + 2 AH2. Its pathway is porphyrin-containing compound metabolism; heme A biosynthesis; heme A from heme O: step 1/1. Functionally, catalyzes the conversion of heme O to heme A by two successive hydroxylations of the methyl group at C8. The first hydroxylation forms heme I, the second hydroxylation results in an unstable dihydroxymethyl group, which spontaneously dehydrates, resulting in the formyl group of heme A. In Methylobacterium sp. (strain 4-46), this protein is Heme A synthase.